The chain runs to 334 residues: Ketol-acid reductoisomerase (NADP(+)) (334 aa).

One can recognise a KARI N-terminal Rossmann domain in the interval 1–181; sequence MTTVYYDQSV…GATRAGVLET (181 aa). Residues 25-28, Arg-48, Ser-52, and 82-85 each bind NADP(+); these read YGSQ and DEIQ. His-107 is a catalytic residue. Residue Gly-133 coordinates NADP(+). Residues 182-327 form the KARI C-terminal knotted domain; it reads SFKEETETDL…RELRDMMPFI (146 aa). Asp-190, Glu-194, Glu-226, and Glu-230 together coordinate Mg(2+). Ser-251 is a substrate binding site.

It belongs to the ketol-acid reductoisomerase family. The cofactor is Mg(2+).

The enzyme catalyses (2R)-2,3-dihydroxy-3-methylbutanoate + NADP(+) = (2S)-2-acetolactate + NADPH + H(+). It catalyses the reaction (2R,3R)-2,3-dihydroxy-3-methylpentanoate + NADP(+) = (S)-2-ethyl-2-hydroxy-3-oxobutanoate + NADPH + H(+). It functions in the pathway amino-acid biosynthesis; L-isoleucine biosynthesis; L-isoleucine from 2-oxobutanoate: step 2/4. It participates in amino-acid biosynthesis; L-valine biosynthesis; L-valine from pyruvate: step 2/4. Its function is as follows. Involved in the biosynthesis of branched-chain amino acids (BCAA). Catalyzes an alkyl-migration followed by a ketol-acid reduction of (S)-2-acetolactate (S2AL) to yield (R)-2,3-dihydroxy-isovalerate. In the isomerase reaction, S2AL is rearranged via a Mg-dependent methyl migration to produce 3-hydroxy-3-methyl-2-ketobutyrate (HMKB). In the reductase reaction, this 2-ketoacid undergoes a metal-dependent reduction by NADPH to yield (R)-2,3-dihydroxy-isovalerate. This Staphylococcus saprophyticus subsp. saprophyticus (strain ATCC 15305 / DSM 20229 / NCIMB 8711 / NCTC 7292 / S-41) protein is Ketol-acid reductoisomerase (NADP(+)).